The following is a 211-amino-acid chain: tRNA (pseudouridine(54)-N(1))-methyltransferase (211 aa).

S-adenosyl-L-methionine contacts are provided by L128, G150, and C183.

Belongs to the methyltransferase superfamily. TrmY family. Homodimer.

It localises to the cytoplasm. The catalysed reaction is pseudouridine(54) in tRNA + S-adenosyl-L-methionine = N(1)-methylpseudouridine(54) in tRNA + S-adenosyl-L-homocysteine + H(+). Specifically catalyzes the N1-methylation of pseudouridine at position 54 (Psi54) in tRNAs. The protein is tRNA (pseudouridine(54)-N(1))-methyltransferase of Methanosarcina acetivorans (strain ATCC 35395 / DSM 2834 / JCM 12185 / C2A).